Consider the following 137-residue polypeptide: Large ribosomal subunit protein uL16 (137 aa).

It belongs to the universal ribosomal protein uL16 family. As to quaternary structure, part of the 50S ribosomal subunit.

In terms of biological role, binds 23S rRNA and is also seen to make contacts with the A and possibly P site tRNAs. This Streptococcus thermophilus (strain CNRZ 1066) protein is Large ribosomal subunit protein uL16.